Here is a 290-residue protein sequence, read N- to C-terminus: Serine protease 27 (290 aa).

An N-terminal signal peptide occupies residues 1-22; sequence MRRPAAVPLLLLLCFGSQRAKA. Positions 23–34 are cleaved as a propeptide — activation peptide; that stretch reads ATACGRPRMLNR. The Peptidase S1 domain maps to 35-277; that stretch reads MVGGQDTQEG…HHNWIHRIIP (243 aa). N-linked (GlcNAc...) asparagine glycosylation occurs at N55. A disulfide bond links C60 and C76. Residue H75 is the Charge relay system of the active site. N79 is a glycosylation site (N-linked (GlcNAc...) asparagine). D124 acts as the Charge relay system in catalysis. Cystine bridges form between C158–C235, C191–C214, and C225–C253. Residue S229 is the Charge relay system of the active site.

This sequence belongs to the peptidase S1 family. Post-translationally, N-glycosylated. As to expression, expressed predominantly in the pancreas.

It localises to the secreted. The sequence is that of Serine protease 27 (PRSS27) from Homo sapiens (Human).